Consider the following 219-residue polypeptide: Deoxyribose-phosphate aldolase (219 aa).

The Proton donor/acceptor role is filled by D89. Catalysis depends on K151, which acts as the Schiff-base intermediate with acetaldehyde. The active-site Proton donor/acceptor is the K180.

Belongs to the DeoC/FbaB aldolase family. DeoC type 1 subfamily.

Its subcellular location is the cytoplasm. The catalysed reaction is 2-deoxy-D-ribose 5-phosphate = D-glyceraldehyde 3-phosphate + acetaldehyde. Its pathway is carbohydrate degradation; 2-deoxy-D-ribose 1-phosphate degradation; D-glyceraldehyde 3-phosphate and acetaldehyde from 2-deoxy-alpha-D-ribose 1-phosphate: step 2/2. Functionally, catalyzes a reversible aldol reaction between acetaldehyde and D-glyceraldehyde 3-phosphate to generate 2-deoxy-D-ribose 5-phosphate. This is Deoxyribose-phosphate aldolase from Clostridioides difficile (strain 630) (Peptoclostridium difficile).